Here is a 1371-residue protein sequence, read N- to C-terminus: F-actin-uncapping protein LRRC16A (1371 aa).

Met-1 carries the N-acetylmethionine modification. Ser-122 bears the Phosphoserine mark. LRR repeat units lie at residues 245–269 (SNRL…LASA), 275–298 (NSGL…SLSI), 304–327 (PKGL…SLSQ), 336–363 (ASTL…FLAQ), 391–418 (LQYL…SFKQ), 423–447 (SLAL…LLLG), 481–506 (IHNI…VWLS), 543–566 (ESPL…IINA), 570–593 (NTSL…MLAK), and 654–678 (LQKI…AYRL). The stretch at 710–734 (GDAIQEDLKSAERLMRDAKNSKTLL) forms a coiled coil. Thr-916 bears the Phosphothreonine mark. Disordered regions lie at residues 957-1000 (PFPS…QPTQ), 1036-1159 (KMDS…RRYG), and 1172-1371 (KAKQ…FIFV). An LRR 11 repeat occupies 958-981 (FPSLRQEKRSSGFISELPSEEGKK). The interval 958–1082 (FPSLRQEKRS…LIKSRSKSER (125 aa)) is inhibits capping activity of CAPZA2. Ser-968 carries the phosphoserine modification. Composition is skewed to basic and acidic residues over residues 977-986 (EEGKKLEHFT) and 1036-1061 (KMDS…EKKK). The interval 1055–1089 (GGDEKKKRDSRKSSGFLNLIKSRSKSERPPTILMT) is necessary for localization at the cell membrane. Phosphoserine occurs at positions 1067 and 1094. Composition is skewed to basic and acidic residues over residues 1106-1130 (CPRK…KTPD) and 1139-1148 (EIGKVERSDS). The span at 1190 to 1199 (AVSQDSSSPA) shows a compositional bias: polar residues. Thr-1228 carries the phosphothreonine modification. The span at 1231–1243 (KNTKAEPKAEAGS) shows a compositional bias: basic and acidic residues. Residues 1244–1265 (RSRSSSSTPTSPKPLLQSPKPS) show a composition bias toward low complexity. Ser-1280, Ser-1288, Ser-1291, Ser-1315, Ser-1324, and Ser-1331 each carry phosphoserine. The span at 1313-1326 (QSSPQPSPRTFSQE) shows a compositional bias: polar residues. The segment covering 1340 to 1353 (QEQKQRSSSKDGHQ) has biased composition (basic and acidic residues). At Ser-1360 the chain carries Phosphoserine.

It belongs to the CARMIL family. Homodimer. Interacts (via C-terminus) with heterodimer capping protein (CP); this interaction uncaps barbed ends capped by CP, enhances barbed-end actin polymerization and promotes lamellipodial formation and cell migration. Interacts with heterodimer capping protein (CP). Interacts with MYO1E. Interacts with TRIO. Expressed in lung, placenta, small intestine, liver, thymus, colon, skeletal muscle, heart and brain. Higher expression in kidney.

It is found in the cytoplasm. The protein localises to the cytoskeleton. Its subcellular location is the cell membrane. The protein resides in the cell projection. It localises to the lamellipodium. Cell membrane-cytoskeleton-associated protein that plays a role in the regulation of actin polymerization at the barbed end of actin filaments. Prevents F-actin heterodimeric capping protein (CP) activity at the leading edges of migrating cells, and hence generates uncapped barbed ends and enhances actin polymerization, however, seems unable to nucleate filaments. Plays a role in lamellipodial protrusion formations and cell migration. This Homo sapiens (Human) protein is F-actin-uncapping protein LRRC16A.